Consider the following 275-residue polypeptide: Dermonecrotic toxin SpeSicTox-betaIIA3i (275 aa).

Histidine 5 is a catalytic residue. The Mg(2+) site is built by glutamate 25 and aspartate 27. The Nucleophile role is filled by histidine 41. 2 disulfides stabilise this stretch: cysteine 45–cysteine 51 and cysteine 47–cysteine 190. Aspartate 85 provides a ligand contact to Mg(2+).

It belongs to the arthropod phospholipase D family. Class II subfamily. It depends on Mg(2+) as a cofactor. In terms of tissue distribution, expressed by the venom gland.

The protein resides in the secreted. The enzyme catalyses an N-(acyl)-sphingosylphosphocholine = an N-(acyl)-sphingosyl-1,3-cyclic phosphate + choline. The catalysed reaction is an N-(acyl)-sphingosylphosphoethanolamine = an N-(acyl)-sphingosyl-1,3-cyclic phosphate + ethanolamine. It catalyses the reaction a 1-acyl-sn-glycero-3-phosphocholine = a 1-acyl-sn-glycero-2,3-cyclic phosphate + choline. It carries out the reaction a 1-acyl-sn-glycero-3-phosphoethanolamine = a 1-acyl-sn-glycero-2,3-cyclic phosphate + ethanolamine. Dermonecrotic toxins cleave the phosphodiester linkage between the phosphate and headgroup of certain phospholipids (sphingolipid and lysolipid substrates), forming an alcohol (often choline) and a cyclic phosphate. This toxin acts on sphingomyelin (SM). It may also act on ceramide phosphoethanolamine (CPE), lysophosphatidylcholine (LPC) and lysophosphatidylethanolamine (LPE), but not on lysophosphatidylserine (LPS), and lysophosphatidylglycerol (LPG). It acts by transphosphatidylation, releasing exclusively cyclic phosphate products as second products. Induces dermonecrosis, hemolysis, increased vascular permeability, edema, inflammatory response, and platelet aggregation. The chain is Dermonecrotic toxin SpeSicTox-betaIIA3i from Sicarius peruensis (Six-eyed sand spider).